Reading from the N-terminus, the 846-residue chain is Homeobox protein 12 (846 aa).

Low complexity-rich tracts occupy residues 78 to 94 (IIGSSSNTLSTPSVQAT), 160 to 170 (PLSSSSTVVPA), 237 to 249 (GNHNNNNNNYNYN), 289 to 301 (QPQSQSQSQQLQP), 309 to 321 (LQPQLQSQPQSQQ), 331 to 352 (NNNNNNNNNNNNNNNNNNNNNN), 394 to 443 (NYNQ…SNSN), and 458 to 482 (NNNNNNNKTFQQTSQQQQQQQQQIY). Disordered regions lie at residues 78–103 (IIGSSSNTLSTPSVQATPPTPPPSSS), 151–177 (IVQPPPPSTPLSSSSTVVPASTPPPSV), 230–249 (NGNGNGNGNHNNNNNNYNYN), 286–374 (GTKQ…SSSP), 394–482 (NYNQ…QQIY), and 515–571 (FKQN…NNQF). The segment covering 524 to 546 (NNDDDDDDDDDEEEEEEEEDDND) has biased composition (acidic residues). A coiled-coil region spans residues 553–604 (SYDEENNNNNNNNNNNNQFKNESIIIGDNYYEIINDRIKSIKQKLHFLEKNS). Residues 559-569 (NNNNNNNNNNN) show a composition bias toward low complexity. Positions 773–835 (DKKNRRTLND…NKRSREKNQR (63 aa)) form a DNA-binding region, homeobox.

The protein resides in the nucleus. Functionally, putative transcription factor. The sequence is that of Homeobox protein 12 (hbx12) from Dictyostelium discoideum (Social amoeba).